The sequence spans 375 residues: Succinyl-diaminopimelate desuccinylase (375 aa).

Residue H66 participates in Zn(2+) binding. The active site involves D68. Position 99 (D99) interacts with Zn(2+). Residue E133 is the Proton acceptor of the active site. Residues E134, E162, and H348 each contribute to the Zn(2+) site.

It belongs to the peptidase M20A family. DapE subfamily. Homodimer. It depends on Zn(2+) as a cofactor. Co(2+) serves as cofactor.

The catalysed reaction is N-succinyl-(2S,6S)-2,6-diaminopimelate + H2O = (2S,6S)-2,6-diaminopimelate + succinate. It functions in the pathway amino-acid biosynthesis; L-lysine biosynthesis via DAP pathway; LL-2,6-diaminopimelate from (S)-tetrahydrodipicolinate (succinylase route): step 3/3. Catalyzes the hydrolysis of N-succinyl-L,L-diaminopimelic acid (SDAP), forming succinate and LL-2,6-diaminopimelate (DAP), an intermediate involved in the bacterial biosynthesis of lysine and meso-diaminopimelic acid, an essential component of bacterial cell walls. The sequence is that of Succinyl-diaminopimelate desuccinylase from Escherichia coli O157:H7.